A 120-amino-acid polypeptide reads, in one-letter code: Ribosome-binding factor A (120 aa).

The protein belongs to the RbfA family. Monomer. Binds 30S ribosomal subunits, but not 50S ribosomal subunits or 70S ribosomes.

The protein resides in the cytoplasm. Functionally, one of several proteins that assist in the late maturation steps of the functional core of the 30S ribosomal subunit. Associates with free 30S ribosomal subunits (but not with 30S subunits that are part of 70S ribosomes or polysomes). Required for efficient processing of 16S rRNA. May interact with the 5'-terminal helix region of 16S rRNA. This is Ribosome-binding factor A from Rickettsia conorii (strain ATCC VR-613 / Malish 7).